The chain runs to 933 residues: Protein translocase subunit SecA (933 aa).

Residues Q87, 105-109, and D515 each bind ATP; that span reads GEGKT. Disordered regions lie at residues 567–588, 840–861, and 880–933; these read ESRRIDNQLRGRSGRQGDPGSS, DVEAVEEQRRQEAERMQMRHAA, and AAAE…CGKL. Positions 845–856 are enriched in basic and acidic residues; sequence EEQRRQEAERMQ. A compositionally biased stretch (low complexity) spans 880–897; it reads AAAEGDSAPTGGAQQQSA. Basic and acidic residues predominate over residues 905–914; the sequence is VAREGPKVGR. The Zn(2+) site is built by C918, C920, C929, and C930. Residues 924–933 show a composition bias toward basic residues; that stretch reads KKYKHCCGKL.

Belongs to the SecA family. As to quaternary structure, monomer and homodimer. Part of the essential Sec protein translocation apparatus which comprises SecA, SecYEG and auxiliary proteins SecDF-YajC and YidC. It depends on Zn(2+) as a cofactor.

The protein localises to the cell inner membrane. It is found in the cytoplasm. It carries out the reaction ATP + H2O + cellular proteinSide 1 = ADP + phosphate + cellular proteinSide 2.. Functionally, part of the Sec protein translocase complex. Interacts with the SecYEG preprotein conducting channel. Has a central role in coupling the hydrolysis of ATP to the transfer of proteins into and across the cell membrane, serving both as a receptor for the preprotein-SecB complex and as an ATP-driven molecular motor driving the stepwise translocation of polypeptide chains across the membrane. This chain is Protein translocase subunit SecA, found in Halorhodospira halophila (strain DSM 244 / SL1) (Ectothiorhodospira halophila (strain DSM 244 / SL1)).